A 432-amino-acid polypeptide reads, in one-letter code: D-amino acid dehydrogenase (432 aa).

FAD is bound at residue 3–17 (VVVLGSGVVGVASAW).

This sequence belongs to the DadA oxidoreductase family. It depends on FAD as a cofactor.

The catalysed reaction is a D-alpha-amino acid + A + H2O = a 2-oxocarboxylate + AH2 + NH4(+). Its pathway is amino-acid degradation; D-alanine degradation; NH(3) and pyruvate from D-alanine: step 1/1. Functionally, oxidative deamination of D-amino acids. This Cronobacter sakazakii (strain ATCC BAA-894) (Enterobacter sakazakii) protein is D-amino acid dehydrogenase.